The following is a 165-amino-acid chain: NSGGVLVSVAAFKNHEGYNSKTMVNDIAVIRLSSSLTTSSTIKTIGLATAAPANGAAATVSGWGTTSSGGSIPSQLRYVDVKIVGRTQCASSTYGYGSEIKASMICAYTVGKDSCQGDSGGPLVSGGRLVGVVSWGYGCAAVNYPGVYADVAALRSWVVSAANSV.

The 163-residue stretch at 1–163 (NSGGVLVSVA…LRSWVVSAAN (163 aa)) folds into the Peptidase S1 domain. Asp-26 acts as the Charge relay system in catalysis. 2 disulfide bridges follow: Cys-89-Cys-106 and Cys-115-Cys-139. Residue Ser-119 is the Charge relay system of the active site.

It belongs to the peptidase S1 family.

Its subcellular location is the secreted. It is found in the extracellular space. The enzyme catalyses Preferential cleavage: Arg-|-Xaa, Lys-|-Xaa.. This is Trypsin alpha-3 from Lucilia cuprina (Green bottle fly).